The sequence spans 347 residues: NADH-ubiquinone oxidoreductase chain 2 (347 aa).

11 consecutive transmembrane segments (helical) span residues 1 to 21 (MNPI…MIVM), 25 to 45 (HWLM…PILM), 60 to 80 (FLTQ…NLMF), 89 to 109 (IFNP…LGLS), 111 to 131 (FHFW…LILL), 149 to 169 (INLD…GWGG), 178 to 198 (IMAY…TYNP), 201 to 221 (TALN…LFML), 242 to 262 (SLIL…GFIP), 274 to 294 (DSII…YFYM), and 323 to 343 (MNFL…TPIM).

It belongs to the complex I subunit 2 family. As to quaternary structure, core subunit of respiratory chain NADH dehydrogenase (Complex I) which is composed of 45 different subunits. Interacts with TMEM242.

The protein resides in the mitochondrion inner membrane. It catalyses the reaction a ubiquinone + NADH + 5 H(+)(in) = a ubiquinol + NAD(+) + 4 H(+)(out). In terms of biological role, core subunit of the mitochondrial membrane respiratory chain NADH dehydrogenase (Complex I) which catalyzes electron transfer from NADH through the respiratory chain, using ubiquinone as an electron acceptor. Essential for the catalytic activity and assembly of complex I. The sequence is that of NADH-ubiquinone oxidoreductase chain 2 from Ceratotherium simum (White rhinoceros).